Here is a 275-residue protein sequence, read N- to C-terminus: MPIKTFKPYTQSRRHMSVSSFSNITKTSPEKSLTKIIKKKGGRNNTGQIMVRFRGGGHKRFYRIIDFKRDKFNIPAEVMSIEYDPNRSSSIALLQYLDGEKRYILYPLGVNVGDLLVSGPDAGIKPGNSLPISNIPVGTFVHNLELVEGKGGQFVRSAGVAAQILAKEGDYAHVRMPSGEIRLIRVKCYATIGQVGNLDHENITLGSAGRNRHMGRKPHVRGTAMNAVDHPHGGGRGRSKGNNQPRSPWNQPAKGFKTRPKKIWDWVIISRRNKS.

Residues 222-257 are disordered; sequence GTAMNAVDHPHGGGRGRSKGNNQPRSPWNQPAKGFK. Over residues 240–250 the composition is skewed to polar residues; it reads KGNNQPRSPWN.

This sequence belongs to the universal ribosomal protein uL2 family. Part of the 50S ribosomal subunit. Forms a bridge to the 30S subunit in the 70S ribosome.

Its function is as follows. One of the primary rRNA binding proteins. Required for association of the 30S and 50S subunits to form the 70S ribosome, for tRNA binding and peptide bond formation. It has been suggested to have peptidyltransferase activity; this is somewhat controversial. Makes several contacts with the 16S rRNA in the 70S ribosome. In Endomicrobium trichonymphae, this protein is Large ribosomal subunit protein uL2.